The following is a 316-amino-acid chain: Glutathione synthetase (316 aa).

Residues 124 to 311 form the ATP-grasp domain; sequence NEKLAALLFP…IAGLLFDAIE (188 aa). Residue 151-208 coordinates ATP; sequence FVLEHGQAVLKPLDGMGGRSIFRSGSGDPNLNVILETLTDGNRKLTLAQRFIPDITAG. Mg(2+) is bound by residues Glu-282 and Asn-284.

It belongs to the prokaryotic GSH synthase family. Mg(2+) is required as a cofactor. Mn(2+) serves as cofactor.

It catalyses the reaction gamma-L-glutamyl-L-cysteine + glycine + ATP = glutathione + ADP + phosphate + H(+). The protein operates within sulfur metabolism; glutathione biosynthesis; glutathione from L-cysteine and L-glutamate: step 2/2. This is Glutathione synthetase from Xanthomonas axonopodis pv. citri (strain 306).